Here is a 1083-residue protein sequence, read N- to C-terminus: MEQQQQQQQQQKSVAHISKLFVCTAVDCKDEIEEKFERSYVSLQQQIAGLSDKEMHDILTQFVCKEKQHEEISIGFLYIILTDPAMAPKTYRDITLVSRDGMNVIVANLTLLVAEKYAKLTETARRQLIWVLREFVKHQVLSVENVIWNCLRQAGGGDVSHKNLYLVESLLDIFIEYRAWLETNPFLVQSSVYSFVRLIEDHANPALISLRQKEVKFTISLIRDRFHDIIPLGRDFVRLLQNVARIPEFELLWRDILYNPKSLHPTFNGIWHLLQIRTSRRFLQCRLLPEMERKLHFLASSVKFGNQKRYQDWFQDKYFATPESHSLRSDLIRFIINVIHPTNDMLCSDIIPRWAIIGWLISSCTNPIASANAKLSLFYDWLFFDPAKDNIMNIEPGILVMYHSIRNHPFVSSTLLDFLCRITKNFYVKNEDRIRLGVYNSLKLILDKQVIPNLHPLFESPKLDRELRNLIRENFREFVTPVANMPQSMYPATHTIQAPIFKKEADQRLMQGEIMDAGGGGAFVASSGTNMLVDDDNKIAIAPLESMERENEAVFSDDENLPSTSKNEENTDDDDDLPLSKVRLKEKPVPEKVELPDAIAESFEIFVTKRNSFTWEAFLKDFRTLPASALDETQLNYVISNTVLILRETLPQQNVFSESKTEEKYLAKSISYPLYGLFRFLYENEDKSKKPFQTLLSEICGRLTETGYLLLYFMKIHCKLQTRKNAQQSYQFKTTVYRQICEATDEKIGVCLVRDLDLLEKENTTIYLWLLPDIYREFKTIAINNTELLRITLRCIDAKNVRDIMYSIAQGKLTIFKQDGLLDCIRDSLEYETYEQFCLWQLIQAHDVPLKCIQDLLPELEAANHPEALSHLLLLLKNEEPTNEIIRLLLSREAKSRGDPFVTSALRFWCQRCEEKLSEIIASLLTSKYPSSSPNKRKRPSKGSSAASSTPSADHVLNHLEHYRRSCRHGTGTGLYVHDMMQRALQSAYSHSNESTKKQFSDLFALAAEDETTAVGRRGGSGRGRKQPVGKKDSSNHSASSKKNSDVVKTIYSSDENSSEEDWSKHKVTQPAKKRKKAINDSD.

Disordered regions lie at residues 551–579, 929–953, and 1014–1083; these read NEAV…DLPL, YPSS…TPSA, and AVGR…NDSD. Over residues 942-953 the composition is skewed to low complexity; sequence KGSSAASSTPSA. 4 positions are modified to phosphoserine: Ser-1053, Ser-1054, Ser-1058, and Ser-1059. Basic residues predominate over residues 1066-1077; sequence HKVTQPAKKRKK.

This sequence belongs to the Integrator subunit 3 family. Belongs to the multiprotein complex Integrator, at least composed of IntS1, IntS2, IntS3, IntS4, omd/IntS5, IntS6, defl/IntS7, IntS8, IntS9, IntS10, IntS11, IntS12, asun/IntS13, IntS14 and IntS15. The core complex associates with protein phosphatase 2A subunits mts/PP2A and Pp2A-29B, to form the Integrator-PP2A (INTAC) complex.

It localises to the nucleus. It is found in the cytoplasm. In terms of biological role, component of the integrator complex, a multiprotein complex that terminates RNA polymerase II (Pol II) transcription in the promoter-proximal region of genes. The integrator complex provides a quality checkpoint during transcription elongation by driving premature transcription termination of transcripts that are unfavorably configured for transcriptional elongation: the complex terminates transcription by (1) catalyzing dephosphorylation of the C-terminal domain (CTD) of Pol II subunit Polr2A/Rbp1 and Spt5, and (2) degrading the exiting nascent RNA transcript via endonuclease activity. The integrator complex is also involved in the 3'-end processing of the U7 snRNA, and also the spliceosomal snRNAs U1, U2, U4 and U5. This chain is Integrator complex subunit 3 homolog (IntS3), found in Drosophila grimshawi (Hawaiian fruit fly).